Reading from the N-terminus, the 619-residue chain is MKKLIAIIAVAAVVIAGFVFTANQPEQAEEVASLKTFSSPDEFREYLAKSAEISAFYPVVYTARAEVMVDSSKGAPLGEATPTAIPAVTTTPERYSETNVQVKGIDEPDIVKTDGVNIYYSPFPFIVYIRYPEKYYIDTTKVIRAFPPSNLSITGEIKESGNLLLHENVLMILNSEGIYAYNTETQKEVWSAEFNGSYVDARLYGGKLYVVTRSWLNFGEPCPIRPLTVNGKSVEIACSRIYHPTIPVTVDTTYTVVKLDAKTGEVENSVSFVGSSGMSVVYMSKNAIYVTYNSYADPAKLTYQFISENPDLVPDWIREKIEKLMDYDISSRAKQVEIMYLLEQLRASMSEDERLKFENEYYNRWENFTKKHAREIEKTHIAKFSLQLEAEGMNSVPGRLLNRFSLDEYNGYLRVATTVDWDENDLYVLDEKLEVVGKIQGFGLDERIYAVRFDGDVGFIVTFRQTDPFFVLDLSNPENPKIVGELKIPGFSSYLHRIDENTVLGVGREEGNVKLSLFDISDLTSPKEKNRYILQEYWSEVLSNHHAFLLDSQHGIFFLPAGQNGYIFSYKDGLKLIKAVKGNAVRAIYIDDYLYIIGPEEISVYDENSWEKVGELKLQ.

An N-terminal signal peptide occupies residues 1–21 (MKKLIAIIAVAAVVIAGFVFT).

This is an uncharacterized protein from Archaeoglobus fulgidus (strain ATCC 49558 / DSM 4304 / JCM 9628 / NBRC 100126 / VC-16).